The following is a 216-amino-acid chain: Ras-like protein rasW (216 aa).

GTP is bound at residue 16–23 (GDGGVGKT). Positions 38–46 (YDPTIEDSY) match the Effector region motif. Residues 63-67 (DTAGQ) and 122-125 (NKID) each bind GTP. Positions 171–193 (KRKEDPQSHKPSKDSDSKKPLVN) are disordered. Over residues 172-189 (RKEDPQSHKPSKDSDSKK) the composition is skewed to basic and acidic residues. Cysteine 213 carries the cysteine methyl ester modification. Residue cysteine 213 is the site of S-geranylgeranyl cysteine attachment. Positions 214 to 216 (KMM) are cleaved as a propeptide — removed in mature form.

Belongs to the small GTPase superfamily. Ras family.

It is found in the cell membrane. It carries out the reaction GTP + H2O = GDP + phosphate + H(+). In terms of biological role, ras proteins bind GDP/GTP and possess intrinsic GTPase activity. In Dictyostelium discoideum (Social amoeba), this protein is Ras-like protein rasW (rasW).